The sequence spans 144 residues: Transcription antitermination protein NusB (144 aa).

It belongs to the NusB family.

Involved in transcription antitermination. Required for transcription of ribosomal RNA (rRNA) genes. Binds specifically to the boxA antiterminator sequence of the ribosomal RNA (rrn) operons. The protein is Transcription antitermination protein NusB of Dictyoglomus thermophilum (strain ATCC 35947 / DSM 3960 / H-6-12).